A 356-amino-acid polypeptide reads, in one-letter code: Heparan sulfate 2-O-sulfotransferase 1 (356 aa).

Residues 1–11 (MGLLRIMMPPK) are Cytoplasmic-facing. A helical; Signal-anchor for type II membrane protein membrane pass occupies residues 12–28 (LQLLAVVAFAVAMLFLE). Positions 24 to 51 (MLFLENQIQKLEESRSKLERAIARHEVR) form a coiled coil. At 29–356 (NQIQKLEESR…FYEKIYPKSN (328 aa)) the chain is on the lumenal side. 6 residues coordinate adenosine 3',5'-bisphosphate: lysine 83, threonine 84, alanine 85, serine 86, threonine 87, and serine 88. Residues asparagine 108 and asparagine 127 are each glycosylated (N-linked (GlcNAc...) asparagine). Catalysis depends on residues histidine 140 and histidine 142. Adenosine 3',5'-bisphosphate-binding residues include arginine 164 and serine 172. 2 disulfides stabilise this stretch: cysteine 201-cysteine 209 and cysteine 222-cysteine 228. Residues tyrosine 279, serine 285, threonine 290, and lysine 293 each contribute to the adenosine 3',5'-bisphosphate site.

Belongs to the sulfotransferase 3 family. Homotrimer. Interacts with the C5-epimerase GLCE. In terms of processing, N-glycosylated.

The protein resides in the golgi apparatus membrane. In terms of biological role, catalyzes the transfer of a sulfo group from 3'-phospho-5'-adenylyl sulfate (PAPS) to the 2-OH position of iduronic acid (IdoA) or glucuronic acid (GlcA) within the heparan sulfate (HS) chain and participates in HS biosynthesis. Required for metanephric development of kidney formation, suggesting that 2-O-sulfation within HS is essential for signaling between ureteric bud and metanephric mesenchyme. This is Heparan sulfate 2-O-sulfotransferase 1 from Homo sapiens (Human).